The primary structure comprises 169 residues: Phycobiliprotein beta chain (169 aa).

An N4-methylasparagine modification is found at Asn72. Residue Cys82 coordinates (2R,3E)-phycocyanobilin.

This sequence belongs to the phycobiliprotein family. In terms of assembly, heterodimer of an alpha and a beta chain. In terms of processing, contains one covalently linked bilin chromophore.

It localises to the cellular thylakoid membrane. In terms of biological role, light-harvesting photosynthetic bile pigment-protein from the phycobiliprotein complex. This is a protein functionally equivalent to, but with weaker absorbance than, allophycocyanin beta chain. This chain is Phycobiliprotein beta chain (apcD), found in Mastigocladus laminosus (Fischerella sp.).